The sequence spans 242 residues: Probable 2-phosphosulfolactate phosphatase (242 aa).

Belongs to the ComB family. It depends on Mg(2+) as a cofactor.

The catalysed reaction is (2R)-O-phospho-3-sulfolactate + H2O = (2R)-3-sulfolactate + phosphate. In Prochlorococcus marinus (strain NATL1A), this protein is Probable 2-phosphosulfolactate phosphatase.